Here is a 137-residue protein sequence, read N- to C-terminus: MVHWTQEERDEISKTFQGTDMKTVVTQALDRMFKVYPWTNRYFQKRTDFRSSIHAGIVVGALQDAVKHMDDVKTLFKDLSKKHADDLHVDPGSFHLLTDCIIVELAYLRKDCFTPHIQGIWDKFFEVVIDAISKQYH.

In terms of domain architecture, Globin spans 3-137 (HWTQEERDEI…VIDAISKQYH (135 aa)). H54 and H83 together coordinate heme b.

The protein belongs to the globin family. As to quaternary structure, heterotetramer of two alpha chains and two beta chains. Red blood cells.

Functionally, involved in oxygen transport from gills to the various peripheral tissues. The protein is Hemoglobin subunit beta (HBB) of Mustelus griseus (Spotless smooth-hound).